The chain runs to 181 residues: ADP-ribosylation factor-like protein 1 (181 aa).

Gly-2 carries N-myristoyl glycine lipidation. Residues Gly-24–Thr-31, Thr-45–Thr-48, Gly-70, Asn-126–Asp-129, and Ala-160–Thr-161 each bind GTP. Residues Thr-31 and Thr-48 each coordinate Mg(2+).

It belongs to the small GTPase superfamily. Arf family. The GTP-bound form interacts with GOLGA1. The GTP-bound form interacts with GOLGA4 and RGPD8. The GTP-bound form directly interacts with ARFIP2. Binds to SCOC, preferentially in its GTP-bound form. May interact with UNC119. Interacts with ARFIP1; this interaction directs ARFIP1 to the trans-Golgi membranes. Interacts with ARFGEF1 (via N-terminus). In terms of tissue distribution, detected in heart, liver, lung and liver (at protein level). Detected in fetal heart, lung, liver and kidney. Detected in adult heart, placenta, lung, liver, skeletal muscle, kidney and pancreas.

The protein localises to the golgi apparatus membrane. It is found in the golgi apparatus. Its subcellular location is the trans-Golgi network membrane. The protein resides in the membrane. In terms of biological role, GTP-binding protein that recruits several effectors, such as golgins, arfaptins and Arf-GEFs to the trans-Golgi network, and modulates their functions at the Golgi complex. Plays thereby a role in a wide range of fundamental cellular processes, including cell polarity, innate immunity, or protein secretion mediated by arfaptins, which were shown to play a role in maintaining insulin secretion from pancreatic beta cells. This is ADP-ribosylation factor-like protein 1 (ARL1) from Homo sapiens (Human).